The following is a 190-amino-acid chain: Cysteine dioxygenase (190 aa).

Residues H78, H80, and H132 each contribute to the Fe cation site. The 3'-(S-cysteinyl)-tyrosine (Cys-Tyr) cross-link spans 85 to 149 (CFVKILDGEL…SNGAVSLHLY (65 aa)).

Belongs to the cysteine dioxygenase family. It depends on Fe cation as a cofactor. The thioether cross-link between Cys-85 and Tyr-149 plays a structural role through stabilizing the Fe(2+) ion, and prevents the production of highly damaging free hydroxyl radicals by holding the oxygen radical via hydroxyl hydrogen.

It carries out the reaction L-cysteine + O2 = 3-sulfino-L-alanine + H(+). It functions in the pathway organosulfur biosynthesis; taurine biosynthesis; hypotaurine from L-cysteine: step 1/2. The polypeptide is Cysteine dioxygenase (cdo-1) (Caenorhabditis briggsae).